We begin with the raw amino-acid sequence, 122 residues long: Small ribosomal subunit protein uS13 (122 aa).

Residues R93 to K122 are disordered.

The protein belongs to the universal ribosomal protein uS13 family. In terms of assembly, part of the 30S ribosomal subunit. Forms a loose heterodimer with protein S19. Forms two bridges to the 50S subunit in the 70S ribosome.

Functionally, located at the top of the head of the 30S subunit, it contacts several helices of the 16S rRNA. In the 70S ribosome it contacts the 23S rRNA (bridge B1a) and protein L5 of the 50S subunit (bridge B1b), connecting the 2 subunits; these bridges are implicated in subunit movement. Contacts the tRNAs in the A and P-sites. This Corynebacterium kroppenstedtii (strain DSM 44385 / JCM 11950 / CIP 105744 / CCUG 35717) protein is Small ribosomal subunit protein uS13.